The following is a 375-amino-acid chain: Succinyl-diaminopimelate desuccinylase (375 aa).

H66 provides a ligand contact to Zn(2+). D68 is an active-site residue. D99 provides a ligand contact to Zn(2+). The Proton acceptor role is filled by E133. Zn(2+) contacts are provided by E134, E162, and H348.

Belongs to the peptidase M20A family. DapE subfamily. In terms of assembly, homodimer. Zn(2+) is required as a cofactor. Co(2+) serves as cofactor.

The enzyme catalyses N-succinyl-(2S,6S)-2,6-diaminopimelate + H2O = (2S,6S)-2,6-diaminopimelate + succinate. The protein operates within amino-acid biosynthesis; L-lysine biosynthesis via DAP pathway; LL-2,6-diaminopimelate from (S)-tetrahydrodipicolinate (succinylase route): step 3/3. Functionally, catalyzes the hydrolysis of N-succinyl-L,L-diaminopimelic acid (SDAP), forming succinate and LL-2,6-diaminopimelate (DAP), an intermediate involved in the bacterial biosynthesis of lysine and meso-diaminopimelic acid, an essential component of bacterial cell walls. The protein is Succinyl-diaminopimelate desuccinylase of Klebsiella pneumoniae (strain 342).